Consider the following 611-residue polypeptide: ATP-dependent zinc metalloprotease FtsH (611 aa).

Position 1 (Met-1) is a topological domain, cytoplasmic. Residues 2–22 (VKNLIFWLVITVVLMSIFQNF) traverse the membrane as a helical segment. The Extracellular segment spans residues 23–98 (NTNDVNNHKV…IGAIPEEPSL (76 aa)). The chain crosses the membrane as a helical span at residues 99–119 (FISILISWFPMLLLIGVWIFF). The Cytoplasmic portion of the chain corresponds to 120 to 611 (MRQMQMGGGK…KGWIETDTNK (492 aa)). ATP is bound at residue 192-199 (GPPGTGKT). Zn(2+) is bound at residue His-414. Residue Glu-415 is part of the active site. Zn(2+)-binding residues include His-418 and Asp-492.

This sequence in the central section; belongs to the AAA ATPase family. It in the C-terminal section; belongs to the peptidase M41 family. As to quaternary structure, homohexamer. It depends on Zn(2+) as a cofactor.

It localises to the cell membrane. Its function is as follows. Acts as a processive, ATP-dependent zinc metallopeptidase for both cytoplasmic and membrane proteins. Plays a role in the quality control of integral membrane proteins. The sequence is that of ATP-dependent zinc metalloprotease FtsH from Buchnera aphidicola subsp. Acyrthosiphon pisum (strain APS) (Acyrthosiphon pisum symbiotic bacterium).